The chain runs to 169 residues: Cytochrome c oxidase subunit 4 isoform 1, mitochondrial (169 aa).

The transit peptide at 1-22 directs the protein to the mitochondrion; it reads MLASRALSLIGKRAISTSVCLR. The Mitochondrial matrix segment spans residues 23-99; that stretch reads AHGSVVKSED…FAEMNRGTNE (77 aa). Lysine 29 is modified (N6-acetyllysine; alternate). Lysine 29 is subject to N6-succinyllysine; alternate. Serine 56 and serine 58 each carry phosphoserine. N6-acetyllysine; alternate is present on lysine 60. At lysine 60 the chain carries N6-succinyllysine; alternate. N6-acetyllysine is present on lysine 67. A helical transmembrane segment spans residues 100 to 125; the sequence is WKTVVGMAMFFIGFTALVLIWEKSYV. Topologically, residues 126–169 are mitochondrial intermembrane; the sequence is YGPIPHTFDRDWVAMQTKRMLDMKANPIQGFSAKWDYDKNEWKK.

The protein belongs to the cytochrome c oxidase IV family. Component of the cytochrome c oxidase (complex IV, CIV), a multisubunit enzyme composed of 14 subunits. The complex is composed of a catalytic core of 3 subunits MT-CO1, MT-CO2 and MT-CO3, encoded in the mitochondrial DNA, and 11 supernumerary subunits COX4I, COX5A, COX5B, COX6A, COX6B, COX6C, COX7A, COX7B, COX7C, COX8 and NDUFA4, which are encoded in the nuclear genome. The complex exists as a monomer or a dimer and forms supercomplexes (SCs) in the inner mitochondrial membrane with NADH-ubiquinone oxidoreductase (complex I, CI) and ubiquinol-cytochrome c oxidoreductase (cytochrome b-c1 complex, complex III, CIII), resulting in different assemblies (supercomplex SCI(1)III(2)IV(1) and megacomplex MCI(2)III(2)IV(2)). Interacts with PHB2; the interaction decreases in absence of SPHK2. Interacts with AFG1L. Interacts with ABCB7; this interaction allows the regulation of cellular iron homeostasis and cellular reactive oxygen species (ROS) levels in cardiomyocytes. Interacts with FLVCR2; this interaction occurs in the absence of heme and is disrupted upon heme binding. Interacts with IRGC.

Its subcellular location is the mitochondrion inner membrane. It functions in the pathway energy metabolism; oxidative phosphorylation. Component of the cytochrome c oxidase, the last enzyme in the mitochondrial electron transport chain which drives oxidative phosphorylation. The respiratory chain contains 3 multisubunit complexes succinate dehydrogenase (complex II, CII), ubiquinol-cytochrome c oxidoreductase (cytochrome b-c1 complex, complex III, CIII) and cytochrome c oxidase (complex IV, CIV), that cooperate to transfer electrons derived from NADH and succinate to molecular oxygen, creating an electrochemical gradient over the inner membrane that drives transmembrane transport and the ATP synthase. Cytochrome c oxidase is the component of the respiratory chain that catalyzes the reduction of oxygen to water. Electrons originating from reduced cytochrome c in the intermembrane space (IMS) are transferred via the dinuclear copper A center (CU(A)) of subunit 2 and heme A of subunit 1 to the active site in subunit 1, a binuclear center (BNC) formed by heme A3 and copper B (CU(B)). The BNC reduces molecular oxygen to 2 water molecules using 4 electrons from cytochrome c in the IMS and 4 protons from the mitochondrial matrix. The polypeptide is Cytochrome c oxidase subunit 4 isoform 1, mitochondrial (Cox4i1) (Mus musculus (Mouse)).